We begin with the raw amino-acid sequence, 158 residues long: Ribosome maturation factor RimP (158 aa).

The protein belongs to the RimP family.

Its subcellular location is the cytoplasm. Its function is as follows. Required for maturation of 30S ribosomal subunits. The polypeptide is Ribosome maturation factor RimP (Leuconostoc citreum (strain KM20)).